The primary structure comprises 187 residues: Protein GrpE (187 aa).

Residues 1 to 26 form a disordered region; it reads MHDPKESLETNIQETESQEKLPETPI.

It belongs to the GrpE family. Homodimer.

The protein localises to the cytoplasm. Participates actively in the response to hyperosmotic and heat shock by preventing the aggregation of stress-denatured proteins, in association with DnaK and GrpE. It is the nucleotide exchange factor for DnaK and may function as a thermosensor. Unfolded proteins bind initially to DnaJ; upon interaction with the DnaJ-bound protein, DnaK hydrolyzes its bound ATP, resulting in the formation of a stable complex. GrpE releases ADP from DnaK; ATP binding to DnaK triggers the release of the substrate protein, thus completing the reaction cycle. Several rounds of ATP-dependent interactions between DnaJ, DnaK and GrpE are required for fully efficient folding. This is Protein GrpE from Dichelobacter nodosus (strain VCS1703A).